Here is a 550-residue protein sequence, read N- to C-terminus: MRFSLSTTAAALAVSLAFAPGWAVAWEKDKTYDITILHTNDHHGHFWQNDHGEYGLAAQKTLVDDIRKQVAAAGGSLLLLSGGDINTGVPESDLQDAEPDFRGMNLVGYDAMAIGNHEFDNPLSVLRQQEKWATFPLLSANIYQKSTQQRLFKPYALFDKQGVKIAVIGLTTDDTAKIGNPEYFTDIEFRVPATEAKQVVEQLRKTEKPDIIIAATHMGHYDDGKHGSNAPGDVEMARSLPAGYLDMIVGGHSQDPVCMASENHKQADYVPGTPCAPDRQNGTWIVQAHEWGKYVGRADFKFRNGELKLVSYQLIPINLKKKVEKADGTSERIFYTQEIAQDPSMLKLLTPFEQQGKAQLDVKVGSVNGKLEGDRSKVRFEQTNLARLLLAAQMERAGADFAVMSGGGVRDSIDAGDITYKDVLKVQPFGNTLVYADMKGSEVEKYLAVVANKKVDSGAYAQFANVSLVADGKGVSNVKIQGKPLDPNKTYRLATLNFNALGGDGYPKIDTLPSYVNTGFIDAEVLKQYIEKHSPLDASQYQPKGEIVYK.

The signal sequence occupies residues methionine 1–alanine 25. Positions 41, 43, 84, 116, 217, 252, and 254 each coordinate a divalent metal cation. Cysteine 258 and cysteine 275 are joined by a disulfide. Residues arginine 375 to arginine 379 and phenylalanine 498 to aspartate 504 each bind substrate.

The protein belongs to the 5'-nucleotidase family. It depends on Co(2+) as a cofactor.

The protein localises to the periplasm. The enzyme catalyses UDP-sugar + H2O = UMP + alpha-D-aldose 1-phosphate.. The catalysed reaction is a ribonucleoside 5'-phosphate + H2O = a ribonucleoside + phosphate. Degradation of external UDP-glucose to uridine monophosphate and glucose-1-phosphate, which can then be used by the cell. The protein is Protein UshA (ushA) of Yersinia enterocolitica serotype O:8 / biotype 1B (strain NCTC 13174 / 8081).